The following is a 1001-amino-acid chain: Serine/threonine-protein kinase TAO1-A (1001 aa).

The Protein kinase domain occupies 28–281; that stretch reads FSDLREIGHG…SDELLKNMFV (254 aa). Residues 34–42 and lysine 57 contribute to the ATP site; that span reads IGHGSFGAV. Aspartate 151 functions as the Proton acceptor in the catalytic mechanism. Disordered regions lie at residues 324 to 431 and 567 to 586; these read PAVE…HKSH and KEEL…EWLS. Positions 350 to 370 are enriched in low complexity; the sequence is SNQSIPSMSISASSQSSSVTS. Composition is skewed to basic and acidic residues over residues 375–388 and 577–586; these read SDDK…EGDH and PKKEKQEWLS. Coiled coils occupy residues 458-651 and 754-877; these read SELR…EHAM and KAVL…EIEA. The tract at residues 911 to 1001 is disordered; that stretch reads SHNPTGGPGP…ISNGSRMSYT (91 aa). Residues 921–930 are compositionally biased toward low complexity; sequence HWGHPMAGPP. 2 stretches are compositionally biased toward polar residues: residues 949–967 and 974–1001; these read GSVQ…NSPQ and SGGQ…MSYT.

It belongs to the protein kinase superfamily. STE Ser/Thr protein kinase family. STE20 subfamily.

Its subcellular location is the cytoplasm. It carries out the reaction L-seryl-[protein] + ATP = O-phospho-L-seryl-[protein] + ADP + H(+). It catalyses the reaction L-threonyl-[protein] + ATP = O-phospho-L-threonyl-[protein] + ADP + H(+). Serine/threonine-protein kinase involved in various processes such as p38/mapk14 stress-activated MAPK cascade, DNA damage response and regulation of cytoskeleton stability. Acts as an activator of the p38/MAPK14 stress-activated MAPK cascade by mediating phosphorylation and subsequent activation of upstream MAP kinase kinases. In response to DNA damage, involved in the G2/M transition DNA damage checkpoint by activating the p38/MAPK14 stress-activated MAPK cascade. The chain is Serine/threonine-protein kinase TAO1-A (taok1-a) from Xenopus laevis (African clawed frog).